A 167-amino-acid chain; its full sequence is Gametocyte-specific factor 1 (167 aa).

CHHC U11-48K-type zinc fingers lie at residues 14–41 (LLQC…RKNH) and 48–75 (LATC…DDKS). Residues Cys17, His23, His33, Cys37, Cys51, His57, His67, and Cys71 each coordinate Zn(2+).

This sequence belongs to the UPF0224 (FAM112) family.

The protein localises to the cytoplasm. Required for spermatogenesis and is involved in the suppression of retrotransposon transcription in male germ cells. The polypeptide is Gametocyte-specific factor 1 (GTSF1) (Bos taurus (Bovine)).